Here is a 304-residue protein sequence, read N- to C-terminus: Acetylglutamate kinase (304 aa).

Substrate is bound by residues 69–70, R91, and N202; that span reads GG.

Belongs to the acetylglutamate kinase family. ArgB subfamily.

Its subcellular location is the cytoplasm. It carries out the reaction N-acetyl-L-glutamate + ATP = N-acetyl-L-glutamyl 5-phosphate + ADP. It participates in amino-acid biosynthesis; L-arginine biosynthesis; N(2)-acetyl-L-ornithine from L-glutamate: step 2/4. Catalyzes the ATP-dependent phosphorylation of N-acetyl-L-glutamate. This is Acetylglutamate kinase from Caulobacter sp. (strain K31).